Consider the following 350-residue polypeptide: dTDP-D-glucose 4,6-dehydratase (350 aa).

Thr-142 serves as a coordination point for substrate. The Proton donor role is filled by Asp-143. Catalysis depends on proton acceptor residues Glu-144 and Tyr-166.

The protein belongs to the NAD(P)-dependent epimerase/dehydratase family. dTDP-glucose dehydratase subfamily. Requires NAD(+) as cofactor.

It catalyses the reaction dTDP-alpha-D-glucose = dTDP-4-dehydro-6-deoxy-alpha-D-glucose + H2O. The sequence is that of dTDP-D-glucose 4,6-dehydratase (TGDS) from Homo sapiens (Human).